Reading from the N-terminus, the 199-residue chain is Glycerol-3-phosphate acyltransferase (199 aa).

Transmembrane regions (helical) follow at residues 5–25, 56–76, 83–103, 118–138, and 141–161; these read VLTI…SAVL, SAAL…YLAF, IALG…IFFG, APIG…LVLV, and YSSF…WWLD.

It belongs to the PlsY family. As to quaternary structure, probably interacts with PlsX.

Its subcellular location is the cell inner membrane. It catalyses the reaction an acyl phosphate + sn-glycerol 3-phosphate = a 1-acyl-sn-glycero-3-phosphate + phosphate. It functions in the pathway lipid metabolism; phospholipid metabolism. Its function is as follows. Catalyzes the transfer of an acyl group from acyl-phosphate (acyl-PO(4)) to glycerol-3-phosphate (G3P) to form lysophosphatidic acid (LPA). This enzyme utilizes acyl-phosphate as fatty acyl donor, but not acyl-CoA or acyl-ACP. The sequence is that of Glycerol-3-phosphate acyltransferase from Shewanella halifaxensis (strain HAW-EB4).